A 435-amino-acid chain; its full sequence is GTPase Der (435 aa).

2 consecutive EngA-type G domains span residues 2-167 (ATVV…RESG) and 178-351 (PKIA…ESYC). GTP contacts are provided by residues 8–15 (GRANVGKS), 55–59 (DTCGV), 118–121 (NKSE), 184–191 (GKPNVGKS), 231–235 (DTAGM), and 297–300 (NKFD). Residues 352-435 (RKVPQQLLSK…PLVIEFKSRR (84 aa)) enclose the KH-like domain.

Belongs to the TRAFAC class TrmE-Era-EngA-EngB-Septin-like GTPase superfamily. EngA (Der) GTPase family. As to quaternary structure, associates with the 50S ribosomal subunit.

In terms of biological role, GTPase that plays an essential role in the late steps of ribosome biogenesis. The chain is GTPase Der from Pseudothermotoga lettingae (strain ATCC BAA-301 / DSM 14385 / NBRC 107922 / TMO) (Thermotoga lettingae).